Consider the following 1287-residue polypeptide: Rho GTPase-activating protein 33 (1287 aa).

Residues 1 to 40 are disordered; it reads MVARSTDSLDGPGEGSVQPLPTAGGPSVKGKPGKRLSAPR. Phosphoserine is present on Ser8. Positions 59-168 constitute a PX; atypical domain; the sequence is FGHIQLLLSP…CGPVLTWMEL (110 aa). Positions 186 to 248 constitute an SH3 domain; it reads PAVAAAHVIK…PSECVELFTE (63 aa). Residues 315-510 form the Rho-GAP domain; the sequence is CDLGEHLSNS…FLLTHVDVLF (196 aa). 6 disordered regions span residues 551–792, 813–832, 859–1030, 1056–1075, 1090–1134, and 1146–1287; these read RTQG…SPAA, AGGA…GRSL, KLRG…VPTP, GPPS…SLGP, GASE…SPDF, and PPDH…RSYC. Low complexity predominate over residues 558 to 571; that stretch reads TPTEPTTPKAPASP. Position 570 is a phosphoserine (Ser570). Over residues 572–584 the composition is skewed to basic and acidic residues; it reads AERRKGERGEKQR. Over residues 622 to 645 the composition is skewed to polar residues; it reads SGSRPDTVTLRSAKSEESLSSQAS. Ser636 is subject to Phosphoserine. Residues 672-709 are compositionally biased toward low complexity; the sequence is AGSCESLSSSSSSESSSSESSSSSSESSAAGLGALSGS. At Ser727 the chain carries Phosphoserine. The span at 752–766 shows a compositional bias: pro residues; that stretch reads PGDPAPPASPAPPAP. Low complexity-rich tracts occupy residues 813 to 829 and 896 to 919; these read AGGA…LSPG and PARL…SQQE. Composition is skewed to polar residues over residues 972 to 981 and 1019 to 1028; these read RQQSDGSLLR and SPCSVPSQVP. Tyr1169 carries the post-translational modification Phosphotyrosine. Over residues 1175–1189 the composition is skewed to low complexity; the sequence is GPRGPSPASSSSSSP. Arg1244 is subject to Omega-N-methylarginine. The segment covering 1274–1287 has biased composition (polar residues); sequence SWSLHSEGQTRSYC.

The protein belongs to the PX domain-containing GAP family. As to quaternary structure, specifically interacts with CDC42 and RHOQ/TC10 through its Rho-GAP domain. Interacts with NEK6.

Its function is as follows. May be involved in several stages of intracellular trafficking. Could play an important role in the regulation of glucose transport by insulin. May act as a downstream effector of RHOQ/TC10 in the regulation of insulin-stimulated glucose transport. The sequence is that of Rho GTPase-activating protein 33 (ARHGAP33) from Homo sapiens (Human).